The following is a 315-amino-acid chain: Methionyl-tRNA formyltransferase (315 aa).

(6S)-5,6,7,8-tetrahydrofolate is bound at residue 113-116; that stretch reads SLLP.

This sequence belongs to the Fmt family.

The catalysed reaction is L-methionyl-tRNA(fMet) + (6R)-10-formyltetrahydrofolate = N-formyl-L-methionyl-tRNA(fMet) + (6S)-5,6,7,8-tetrahydrofolate + H(+). Attaches a formyl group to the free amino group of methionyl-tRNA(fMet). The formyl group appears to play a dual role in the initiator identity of N-formylmethionyl-tRNA by promoting its recognition by IF2 and preventing the misappropriation of this tRNA by the elongation apparatus. This chain is Methionyl-tRNA formyltransferase, found in Shigella boydii serotype 18 (strain CDC 3083-94 / BS512).